Reading from the N-terminus, the 456-residue chain is Chromosomal replication initiator protein DnaA 1 (456 aa).

Residues 1–68 form a domain I, interacts with DnaA modulators region; the sequence is MRAWEEFLLL…KASLINNNGK (68 aa). A domain II region spans residues 68-101; it reads KPIRVRVTSLDKSTPFKETQIQQEKTAYFTMKYG. Residues 102 to 320 form a domain III, AAA+ region region; the sequence is DIDPNMSFAN…HALTTLAKRV (219 aa). ATP-binding residues include Ser150, Gly152, Lys153, and Thr154. Positions 321 to 456 are domain IV, binds dsDNA; that stretch reads AYKKLSHQML…AYQSLDFIED (136 aa).

It belongs to the DnaA family. In terms of assembly, oligomerizes as a right-handed, spiral filament on DNA at oriC.

The protein resides in the cytoplasm. Plays an essential role in the initiation and regulation of chromosomal replication. ATP-DnaA binds to the origin of replication (oriC) to initiate formation of the DNA replication initiation complex once per cell cycle. Binds the DnaA box (a 9 base pair repeat at the origin) and separates the double-stranded (ds)DNA. Forms a right-handed helical filament on oriC DNA; dsDNA binds to the exterior of the filament while single-stranded (ss)DNA is stabiized in the filament's interior. The ATP-DnaA-oriC complex binds and stabilizes one strand of the AT-rich DNA unwinding element (DUE), permitting loading of DNA polymerase. After initiation quickly degrades to an ADP-DnaA complex that is not apt for DNA replication. Binds acidic phospholipids. The protein is Chromosomal replication initiator protein DnaA 1 of Chlamydia trachomatis serovar D (strain ATCC VR-885 / DSM 19411 / UW-3/Cx).